A 489-amino-acid chain; its full sequence is 3-octaprenyl-4-hydroxybenzoate carboxy-lyase (489 aa).

Residue Asn172 participates in Mn(2+) binding. Prenylated FMN contacts are provided by residues 175-177, 189-191, and 194-195; these read VYR, RWL, and RG. Glu240 is a binding site for Mn(2+). Asp288 (proton donor) is an active-site residue.

Belongs to the UbiD family. Homohexamer. It depends on prenylated FMN as a cofactor. Mn(2+) serves as cofactor.

Its subcellular location is the cell membrane. The enzyme catalyses a 4-hydroxy-3-(all-trans-polyprenyl)benzoate + H(+) = a 2-(all-trans-polyprenyl)phenol + CO2. It functions in the pathway cofactor biosynthesis; ubiquinone biosynthesis. Functionally, catalyzes the decarboxylation of 3-octaprenyl-4-hydroxy benzoate to 2-octaprenylphenol, an intermediate step in ubiquinone biosynthesis. The sequence is that of 3-octaprenyl-4-hydroxybenzoate carboxy-lyase from Wigglesworthia glossinidia brevipalpis.